We begin with the raw amino-acid sequence, 196 residues long: Ribonuclease HII (196 aa).

The RNase H type-2 domain maps to 9–196 (SLIAGVDEVG…APVKRAIGLK (188 aa)). 3 residues coordinate a divalent metal cation: D15, E16, and D107.

It belongs to the RNase HII family. Mn(2+) is required as a cofactor. The cofactor is Mg(2+).

It localises to the cytoplasm. The catalysed reaction is Endonucleolytic cleavage to 5'-phosphomonoester.. Functionally, endonuclease that specifically degrades the RNA of RNA-DNA hybrids. In Photorhabdus laumondii subsp. laumondii (strain DSM 15139 / CIP 105565 / TT01) (Photorhabdus luminescens subsp. laumondii), this protein is Ribonuclease HII.